A 238-amino-acid chain; its full sequence is 2-C-methyl-D-erythritol 4-phosphate cytidylyltransferase (238 aa).

This sequence belongs to the IspD/TarI cytidylyltransferase family. IspD subfamily.

The enzyme catalyses 2-C-methyl-D-erythritol 4-phosphate + CTP + H(+) = 4-CDP-2-C-methyl-D-erythritol + diphosphate. Its pathway is isoprenoid biosynthesis; isopentenyl diphosphate biosynthesis via DXP pathway; isopentenyl diphosphate from 1-deoxy-D-xylulose 5-phosphate: step 2/6. Its function is as follows. Catalyzes the formation of 4-diphosphocytidyl-2-C-methyl-D-erythritol from CTP and 2-C-methyl-D-erythritol 4-phosphate (MEP). This chain is 2-C-methyl-D-erythritol 4-phosphate cytidylyltransferase, found in Acinetobacter baumannii (strain ACICU).